Consider the following 785-residue polypeptide: DNA ligase (785 aa).

NAD(+) contacts are provided by residues 32–36, 81–82, and Glu121; these read DAEYD and SL. Lys123 functions as the N6-AMP-lysine intermediate in the catalytic mechanism. Positions 144, 181, 294, and 318 each coordinate NAD(+). Residues Cys412, Cys415, Cys442, and Cys448 each coordinate Zn(2+). Residues 702–785 enclose the BRCT domain; the sequence is VEGLPEAGHT…AFLAKHNIPV (84 aa).

It belongs to the NAD-dependent DNA ligase family. LigA subfamily. Mg(2+) is required as a cofactor. Mn(2+) serves as cofactor.

It carries out the reaction NAD(+) + (deoxyribonucleotide)n-3'-hydroxyl + 5'-phospho-(deoxyribonucleotide)m = (deoxyribonucleotide)n+m + AMP + beta-nicotinamide D-nucleotide.. Functionally, DNA ligase that catalyzes the formation of phosphodiester linkages between 5'-phosphoryl and 3'-hydroxyl groups in double-stranded DNA using NAD as a coenzyme and as the energy source for the reaction. It is essential for DNA replication and repair of damaged DNA. This chain is DNA ligase, found in Pseudomonas fluorescens (strain SBW25).